The following is a 352-amino-acid chain: D-alanine--D-alanine ligase (352 aa).

One can recognise an ATP-grasp domain in the interval 133-342; it reads KTVFAAAGLP…FPKLVDRLIQ (210 aa). 169 to 224 is an ATP binding site; that stretch reads DETIGYPNFVKPANLGSSVGISKVRSRLELEAALDSAASFDRRIVVEAGVVAREVE. Residues Asp295, Glu309, and Asn311 each contribute to the Mg(2+) site.

Belongs to the D-alanine--D-alanine ligase family. Mg(2+) serves as cofactor. Requires Mn(2+) as cofactor.

The protein localises to the cytoplasm. The enzyme catalyses 2 D-alanine + ATP = D-alanyl-D-alanine + ADP + phosphate + H(+). It participates in cell wall biogenesis; peptidoglycan biosynthesis. Its function is as follows. Cell wall formation. The protein is D-alanine--D-alanine ligase of Acaryochloris marina (strain MBIC 11017).